The sequence spans 351 residues: GTPase Obg (351 aa).

The Obg domain maps to Met1–Ile159. The 169-residue stretch at Ala160 to Leu328 folds into the OBG-type G domain. GTP is bound by residues Gly166–Ser173, Phe191–Tyr195, Asp213–Gly216, Asn280–Asp283, and Ser309–Val311. Mg(2+)-binding residues include Ser173 and Thr193.

The protein belongs to the TRAFAC class OBG-HflX-like GTPase superfamily. OBG GTPase family. As to quaternary structure, monomer. The cofactor is Mg(2+).

It is found in the cytoplasm. An essential GTPase which binds GTP, GDP and possibly (p)ppGpp with moderate affinity, with high nucleotide exchange rates and a fairly low GTP hydrolysis rate. Plays a role in control of the cell cycle, stress response, ribosome biogenesis and in those bacteria that undergo differentiation, in morphogenesis control. The protein is GTPase Obg of Maricaulis maris (strain MCS10) (Caulobacter maris).